The sequence spans 558 residues: Adenine deaminase (558 aa).

It belongs to the metallo-dependent hydrolases superfamily. Adenine deaminase family. The cofactor is Mn(2+).

It carries out the reaction adenine + H2O + H(+) = hypoxanthine + NH4(+). The sequence is that of Adenine deaminase from Methanoregula boonei (strain DSM 21154 / JCM 14090 / 6A8).